The following is a 126-amino-acid chain: Fluoride-specific ion channel FluC (126 aa).

4 consecutive transmembrane segments (helical) span residues 9–29 (LAVFAGGAIGSVLRELLGFQL), 35–55 (LTATFGINIAACFLLGWLYAI), 63–83 (LLHLGAVGFCGGLSTFSSFVL), and 94–114 (WSIGLTAMTLEIAAGLAAAIL). 2 residues coordinate Na(+): G73 and S76.

The protein belongs to the fluoride channel Fluc/FEX (TC 1.A.43) family.

The protein localises to the cell inner membrane. The enzyme catalyses fluoride(in) = fluoride(out). Na(+) is not transported, but it plays an essential structural role and its presence is essential for fluoride channel function. Fluoride-specific ion channel. Important for reducing fluoride concentration in the cell, thus reducing its toxicity. This is Fluoride-specific ion channel FluC from Ruegeria pomeroyi (strain ATCC 700808 / DSM 15171 / DSS-3) (Silicibacter pomeroyi).